The chain runs to 330 residues: Dimethyladenosine transferase 1, mitochondrial (330 aa).

A mitochondrion-targeting transit peptide spans 1 to 84 (MAQPSARVLQ…RSILRRHPQR (84 aa)). S-adenosyl-L-methionine-binding positions include 38–41 (QNFL), asparagine 39, leucine 41, glycine 67, glutamate 89, aspartate 118, and asparagine 140.

The protein belongs to the class I-like SAM-binding methyltransferase superfamily. rRNA adenine N(6)-methyltransferase family. KsgA subfamily.

It localises to the mitochondrion. Functionally, probable S-adenosyl-L-methionine-dependent methyltransferase which specifically dimethylates mitochondrial 12S rRNA at the conserved stem loop. In contrast to mtTFB2, it does not have a critical role in either transcription or regulation of the copy number of mitochondrial DNA. In Drosophila melanogaster (Fruit fly), this protein is Dimethyladenosine transferase 1, mitochondrial (mtTFB1).